A 333-amino-acid chain; its full sequence is Transaldolase NQM1 (333 aa).

Lys-144 (schiff-base intermediate with substrate) is an active-site residue.

The protein belongs to the transaldolase family. Type 1 subfamily. In terms of assembly, homodimer.

The catalysed reaction is D-sedoheptulose 7-phosphate + D-glyceraldehyde 3-phosphate = D-erythrose 4-phosphate + beta-D-fructose 6-phosphate. The protein operates within carbohydrate degradation; pentose phosphate pathway; D-glyceraldehyde 3-phosphate and beta-D-fructose 6-phosphate from D-ribose 5-phosphate and D-xylulose 5-phosphate (non-oxidative stage): step 2/3. Its function is as follows. Transaldolase is important for the balance of metabolites in the pentose-phosphate pathway. This chain is Transaldolase NQM1 (NQM1), found in Saccharomyces cerevisiae (strain ATCC 204508 / S288c) (Baker's yeast).